Reading from the N-terminus, the 482-residue chain is Matrix metalloproteinase-20 (482 aa).

Positions 1–21 are cleaved as a signal peptide; it reads MKVLPASGLAVLVTALKFATA. A propeptide spanning residues 22-106 is cleaved from the precursor; sequence DPNLLAATPR…PRCGVPDVAN (85 aa). The Cysteine switch motif lies at 97–104; sequence PRCGVPDV. Cys-99 is a binding site for Zn(2+). Residues Glu-163, Ala-164, and Asp-165 each contribute to the Ca(2+) site. Zn(2+) is bound by residues His-175 and Asp-177. Positions 182, 183, 185, and 187 each coordinate Ca(2+). Residue His-190 participates in Zn(2+) binding. Residues Glu-196, Gly-197, Gly-199, and Asp-201 each coordinate Ca(2+). His-203 is a Zn(2+) binding site. Ca(2+)-binding residues include Asp-205 and Glu-208. His-225 is a binding site for Zn(2+). Residue Glu-226 is part of the active site. Zn(2+)-binding residues include His-229 and His-235. Hemopexin repeat units follow at residues 292 to 342, 343 to 388, 390 to 438, and 439 to 482; these read PDLC…FPQL, MSNV…GFPR, VQRI…FSGV, and SGHI…WIGC. Cys-295 and Cys-482 are disulfide-bonded.

Belongs to the peptidase M10A family. Zn(2+) is required as a cofactor. Ca(2+) serves as cofactor. Autoactivates at least at the 106-Asn-|-Tyr-107 site. As to expression, expressed in the enamel organ.

It localises to the secreted. The protein resides in the extracellular space. The protein localises to the extracellular matrix. Functionally, degrades amelogenin, the major protein component of the enamel matrix and two of the macromolecules characterizing the cartilage extracellular matrix: aggrecan and the cartilage oligomeric matrix protein (COMP). May play a central role in tooth enamel formation. Cleaves aggrecan at the '360-Asn-|-Phe-361' site. The protein is Matrix metalloproteinase-20 (Mmp20) of Mus musculus (Mouse).